Consider the following 201-residue polypeptide: Acyl-homoserine-lactone synthase (201 aa).

The protein belongs to the autoinducer synthase family.

The catalysed reaction is a fatty acyl-[ACP] + S-adenosyl-L-methionine = an N-acyl-L-homoserine lactone + S-methyl-5'-thioadenosine + holo-[ACP] + H(+). Functionally, required for the synthesis of BHL (N-butanoyl-L-homoserine lactone), and HHL (N-hexanoyl-L-homoserine lactone) autoinducer molecules which bind to RhlR and thus acts in elastase biosynthesis regulation. In Pseudomonas aeruginosa (strain ATCC 15692 / DSM 22644 / CIP 104116 / JCM 14847 / LMG 12228 / 1C / PRS 101 / PAO1), this protein is Acyl-homoserine-lactone synthase (rhlI).